A 345-amino-acid chain; its full sequence is Phosphate acyltransferase (345 aa).

This sequence belongs to the PlsX family. Homodimer. Probably interacts with PlsY.

It localises to the cytoplasm. The enzyme catalyses a fatty acyl-[ACP] + phosphate = an acyl phosphate + holo-[ACP]. Its pathway is lipid metabolism; phospholipid metabolism. Functionally, catalyzes the reversible formation of acyl-phosphate (acyl-PO(4)) from acyl-[acyl-carrier-protein] (acyl-ACP). This enzyme utilizes acyl-ACP as fatty acyl donor, but not acyl-CoA. The protein is Phosphate acyltransferase of Nitratidesulfovibrio vulgaris (strain ATCC 29579 / DSM 644 / CCUG 34227 / NCIMB 8303 / VKM B-1760 / Hildenborough) (Desulfovibrio vulgaris).